We begin with the raw amino-acid sequence, 2572 residues long: MATLNSASTTGTTPSPGHNAPSLPSDTFSSSTPSDPVTKDPPAASSTSENMRSSEPGGQLLESGCGLVPPKEIGEPQEGPDCGHFPPNDPGVEKDKEQEEEEEGLPPMDLSNHLFFTAGGEAYLVAKLSLPGGSELLLPKGFPWGEAGIKEEPSLPFLAYPPPSHLTALHIQHGFDPIQGFSSSDQILSHDTSAPSPAACEERHGAFWSYQLAPNPPGDPKDGPMGNSGGNHVAVFWLCLLCRLGFSKPQAFMDHTQSHGVKLTPAQYQGLSGSPAVLQEGDEGCKALISFLEPKLPARPSSDIPLDNSSTVNMEANVAQTEDGPPEAEVQALILLDEEVMALSPPSPPTATWDPSPTQAKESPVAAGEAGPDWFPEGQEEDGGLCPPLNQSSPTSKEGGTLPAPVGSPEDPSDPPQPYRLADDYTPAPAAFQGLSLSSHMSLLHSRNSCKTLKCPKCNWHYKYQQTLDVHMREKHPESNSHCSYCSAGGAHPRLARGESYNCGYKPYRCDVCNYSTTTKGNLSIHMQSDKHLANLQGFQAGPGGQGSPPEASLPPSAGDKEPKTKSSWQCKVCSYETNISRNLRIHMTSEKHMQNVLMLHQGLPLGLPPGLMGPGPPPPPGATPTSPPELFQYFGPQALGQPQTPLAGPGLRPDKPLEAQLLLNGFHHVGAPARKFPTSAPGSLSPDAHLPPSQLLGSSSDSLPTSPPPDDSLSLKVFRCLVCQAFSTDSLELLLYHCSIGRSLPEAEWKEVAGDTHRCKLCCYGTQLKANFQLHLKTDKHAQKYQLAAHLREGGGAMGTPSPASLGDGAPYGSVSPLHLRCNICDFESNSKEKMQLHARGAAHEENSQIYKFLLDMEGAEAGAELGLYHCLLCAWETPSRLAVLQHLRTPAHRDAQAQRRLQLLQNGPTTEEGLAALQSILSFSHGQLRTPGKAPVTPLAEPPTPEKDAQNKTEQLASEETENKTGPSRDSANQTTVYCCPYCSFLSPESSQVRAHTLSQHAVQPKYRCPLCQEQLVGRPALHFHLSHLHNVVPECVEKLLLVATTVEMTFTTKVLSAPTLSPLDNGQEPPTHGPEPTPSRDQAAEGPNLTPEASPDPLPEPPLASVEVPDKPSGSPGQPPSPAPSPVPEPDAQAEDVAPPPTMAEEEEGTTGELRSAEPAPADSRHPLTYRKTTNFALDKFLDPARPYKCTVCKESFTQKNILLVHYNSVSHLHKMKKAAIDPSAPARGEAGAPPTTTAATDKPFKCTVCRVSYNQSSTLEIHMRSVLHQTRSRGTKTDSKIEGPERSQEEPKEGETEGEVGTEKKGPDTSGFISGLPFLSPPPPPLDLHRFPAPLFTPPVLPPFPLVPESLLKLQQQQLLLPFYLHDLKVGPKLTLAGPAPVLSLPAATPPPPPQPPKAELAEREWERPPMAKEGNEAGPSSPPDPLPNEAARTAAKALLENFGFELVIQYNEGKQAVPPPPTPPPPEALGGGDKLACGACGKLFSNMLILKTHEEHVHRRFLPFEALSRYAAQFRKSYDSLYPPLAEPPKPPDGSLDSPVPHLGPPFLVPEPEAGGTRAPEERSRAGGHWPIEEEESSRGNLPPLVPAGRRFSRTKFTEFQTQALQSFFETSAYPKDGEVERLASLLGLASRVVVVWFQNARQKARKNACEGGSMPTGGGTGGASGCRRCHATFSCVFELVRHLKKCYDDQTLEEEEEEAERGEEEEEVEEEEVEEEQGLEPPAGPEGPLPEPPDGEELSQAEATKAGGKEPEEKATPSPSPAHTCDQCAISFSSQDLLTSHRRLHFLPSLQPSAPPQLLDLPLLVFGERNPLVAATSPMPGPPLKRKHEDGSLSPTGSEAGGGGEGEPPRDKRLRTTILPEQLEILYRWYMQDSNPTRKMLDCISEEVGLKKRVVQVWFQNTRARERKGQFRSTPGGVPSPAVKPPATATPASLPKFNLLLGKVDDGTGREAPKREAPAFPYPTATLASGPQPFLPPGKEATTPTPEPPLPLLPPPPPSEEEGPEEPPKASPESEACSLSAGDLSDSSASSLAEPESPGAGGTSGGPGGGTGVPDGMGQRRYRTQMSSLQLKIMKACYEAYRTPTMQECEVLGEEIGLPKRVIQVWFQNARAKEKKAKLQGTAAGSTGGSSEGLLAAQRTDCPYCDVKYDFYVSCRGHLFSRQHLAKLKEAVRAQLKSESKCYDLAPAPEAPPALKAPPATTPASMPLGAAPTLPRLAPVLLSGPALAQPPLGNLAPFNSGPAASSGLLGLATSVLPTTTVVQTAGPGRPLPQRPMPDQTNTSTAGTTDPVPGPPTEPLGDKVSSERKPVAGPTSSSNDALKNLKALKTTVPALLGGQFLPFPLPPAGGTAPPAVFGPQLQGAYFQQLYGMKKGLFPMNPMIPQTLIGLLPNALLQPPPQPPEPTATAPPKPPELPAPGEGEAGEVDELLTGSTGISTVDVTHRYLCRQCKMAFDGEAPATAHQRSFCFFGRGSGGSMPPPLRVPICTYHCLACEVLLSGREALASHLRSSAHRRKAAPPQGGPPISITNAATAASAAVAFAKEEARLPHTDSNPKTTTTSTLLAL.

Disordered regions lie at residues 1–107 (MATL…GLPP) and 343–425 (LSPP…ADDY). The span at 8–36 (STTGTTPSPGHNAPSLPSDTFSSSTPSDP) shows a compositional bias: low complexity. Polar residues-rich tracts occupy residues 44 to 53 (ASSTSENMRS) and 389 to 398 (LNQSSPTSKE). 2 consecutive C2H2-type zinc fingers follow at residues 453-476 (LKCP…REKH) and 508-532 (YRCD…SDKH). Disordered regions lie at residues 537 to 566 (QGFQ…PKTK), 608 to 655 (LPPG…LRPD), and 675 to 710 (RKFP…SPPP). A compositionally biased stretch (pro residues) spans 615–628 (PGPPPPPGATPTSP). Over residues 696 to 705 (LLGSSSDSLP) the composition is skewed to low complexity. 2 consecutive C2H2-type zinc fingers follow at residues 821-845 (LRCN…GAAH) and 870-894 (YHCL…TPAH). The tract at residues 929–974 (QLRTPGKAPVTPLAEPPTPEKDAQNKTEQLASEETENKTGPSRDSA) is disordered. The span at 954 to 974 (KTEQLASEETENKTGPSRDSA) shows a compositional bias: polar residues. The C2H2-type 5 zinc finger occupies 1009–1032 (YRCPLCQEQLVGRPALHFHLSHLH). The tract at residues 1061-1171 (PTLSPLDNGQ…PAPADSRHPL (111 aa)) is disordered. The span at 1120 to 1132 (GQPPSPAPSPVPE) shows a compositional bias: pro residues. 2 C2H2-type zinc fingers span residues 1191–1217 (YKCT…SHLH) and 1248–1272 (FKCT…SVLH). Disordered stretches follow at residues 1269–1325 (SVLH…FLSP), 1389–1408 (LPAA…LAER), and 1415–1434 (MAKE…LPNE). The segment covering 1279 to 1311 (TKTDSKIEGPERSQEEPKEGETEGEVGTEKKGP) has biased composition (basic and acidic residues). Pro residues predominate over residues 1392–1401 (ATPPPPPQPP). The C2H2-type 8 zinc-finger motif lies at 1480 to 1503 (LACGACGKLFSNMLILKTHEEHVH). A disordered region spans residues 1528 to 1591 (PPLAEPPKPP…SSRGNLPPLV (64 aa)). A DNA-binding region (homeobox 1) is located at residues 1595–1654 (RRFSRTKFTEFQTQALQSFFETSAYPKDGEVERLASLLGLASRVVVVWFQNARQKARKNA). The segment at 1670–1696 (SGCRRCHATFSCVFELVRHLKKCYDDQ) adopts a C2H2-type 9; degenerate zinc-finger fold. Residues 1696 to 1724 (QTLEEEEEEAERGEEEEEVEEEEVEEEQG) show a composition bias toward acidic residues. Disordered regions lie at residues 1696 to 1769 (QTLE…SPAH), 1820 to 1860 (AATS…DKRL), 1912 to 2065 (ERKG…GMGQ), 2268 to 2327 (VQTA…NDAL), and 2398 to 2431 (NALL…EAGE). Positions 1728-1738 (PAGPEGPLPEP) are enriched in pro residues. The C2H2-type 10 zinc finger occupies 1769 to 1791 (HTCDQCAISFSSQDLLTSHRRLH). Residues 1857–1916 (DKRLRTTILPEQLEILYRWYMQDSNPTRKMLDCISEEVGLKKRVVQVWFQNTRARERKGQ) constitute a DNA-binding region (homeobox 2). Over residues 1925 to 1939 (PSPAVKPPATATPAS) the composition is skewed to low complexity. Basic and acidic residues predominate over residues 1949-1963 (KVDDGTGREAPKREA). A compositionally biased stretch (pro residues) spans 1991–2004 (TPEPPLPLLPPPPP). Residues 2017–2044 (SPESEACSLSAGDLSDSSASSLAEPESP) are compositionally biased toward low complexity. Residues 2045–2061 (GAGGTSGGPGGGTGVPD) are compositionally biased toward gly residues. The homeobox 3 DNA-binding region spans 2065 to 2124 (QRRYRTQMSSLQLKIMKACYEAYRTPTMQECEVLGEEIGLPKRVIQVWFQNARAKEKKAK). Residues 2284–2293 (DQTNTSTAGT) show a composition bias toward polar residues. Over residues 2305–2315 (LGDKVSSERKP) the composition is skewed to basic and acidic residues. The segment covering 2402–2422 (QPPPQPPEPTATAPPKPPELP) has biased composition (pro residues). The C2H2-type 11; degenerate zinc-finger motif lies at 2451-2471 (YLCRQCKMAFDGEAPATAHQR). Residues 2495–2519 (YHCLACEVLLSGREALASHLRSSAH) form a C2H2-type 12 zinc finger. The interval 2551–2572 (EARLPHTDSNPKTTTTSTLLAL) is disordered. Low complexity predominate over residues 2563–2572 (TTTTSTLLAL).

The protein resides in the nucleus. Its function is as follows. Transcriptional regulator that is critical for the regulation of pain perception and processing of noxious stimuli. In Homo sapiens (Human), this protein is Zinc finger homeobox protein 2 (ZFHX2).